A 418-amino-acid polypeptide reads, in one-letter code: Lactate dehydrogenase (NAD(+),ferredoxin) subunit LctC (418 aa).

FAD-binding positions include Arg-285, 325-328 (IGLS), 343-348 (SGAVQF), Asn-362, and 380-381 (DL).

The protein belongs to the ETF alpha-subunit/FixB family. Part of the stable heterotrimeric lactate dehydrogenase-Etf complex, which is formed by the lactate dehydrogenase LctD and the electron-transferring flavoprotein (Etf) alpha (LctC) and beta (LctB) subunits. It depends on FAD as a cofactor. Requires [4Fe-4S] cluster as cofactor.

The protein localises to the cytoplasm. It carries out the reaction lactate + 2 reduced [2Fe-2S]-[ferredoxin] + 2 NAD(+) = 2 oxidized [2Fe-2S]-[ferredoxin] + pyruvate + 2 NADH. With respect to regulation, activity is stimulated by divalent cations. Highest stimulation is observed with Ca(2+). Functionally, the lactate dehydrogenase-Etf complex catalyzes the oxidation of lactate to pyruvate. It uses flavin-based electron confurcation to drive endergonic lactate oxidation with NAD(+) as oxidant at the expense of simultaneous exergonic electron flow from reduced ferredoxin to NAD(+). The electron transfer flavoprotein (Etf) mediates the electron transfer between the different donors and acceptors. This chain is Lactate dehydrogenase (NAD(+),ferredoxin) subunit LctC, found in Acetobacterium woodii (strain ATCC 29683 / DSM 1030 / JCM 2381 / KCTC 1655 / WB1).